The sequence spans 481 residues: Guanine nucleotide exchange factor C9orf72 (481 aa).

One can recognise a uDENN C9ORF72-type domain in the interval 23–194 (SPLLAATFAY…ELLSSMKSHS (172 aa)). Residues 200–343 (DIADTVLNDD…SELTAFWRAT (144 aa)) form the cDENN C9ORF72-type domain. The region spanning 370–464 (VLHRDTLVKA…IKPGLHSFIF (95 aa)) is the dDENN C9ORF72-type domain. Residues 461–481 (SFIFGRPFYTSVQERDVLMTF) are required for the homodimerization of the C9orf72-SMCR8 complex.

In terms of assembly, component of the C9orf72-SMCR8 complex, at least composed of C9orf72, SMCR8 and WDR41. The complex is formed of two protomers, each individually consisting of one molecule each of C9orf72, SMCR8 and WDR41. The protomers homodimerize via an interaction between C9orf72 (via C-terminus) and SMCR8 (via N-terminus). Within each protomer SMCR8 (via DENN domain) acts as a bridging protein between WDR41 (via C-terminus and N-terminus) and C9orf72 (via C-terminus). The C9orf72-SMCR8 complex associates with the ULK1/ATG1 kinase complex. Interacts with ULK1/ATG1 kinase complex members ULK1, ATG13 and RB1CC1. Interacts with SMCR8; the interaction is direct. Interacts with HNRNPA1, HNRNPA2B1 and UBQLN2. Interacts with small Rab GTPase RAB1A; the interaction mediates recruitment of RAB1A to the ULK1/ATG1 kinase complex. Also interacts with small Rab GTPase RAB7A. Interacts with cofilin. Interacts with GTP-binding proteins ARF1 and ARF6. Interacts with the DLG4/PSD-95. Interacts with CARM1 (via PH domain-like fold). Interacts with RAB39A and RAB39B (in GDP-bound forms); functions as GEF for RAB39A and RAB39B. Both isoforms are widely expressed, including kidney, lung, liver, heart, testis and several brain regions, such as cerebellum. Also expressed in the frontal cortex and in lymphoblasts (at protein level).

The protein localises to the cytoplasm. It is found in the nucleus. It localises to the P-body. The protein resides in the stress granule. Its subcellular location is the endosome. The protein localises to the lysosome. It is found in the cytoplasmic vesicle. It localises to the autophagosome. The protein resides in the autolysosome. Its subcellular location is the secreted. The protein localises to the cell projection. It is found in the axon. It localises to the growth cone. The protein resides in the perikaryon. Its subcellular location is the dendrite. The protein localises to the presynapse. It is found in the postsynapse. It localises to the nucleus membrane. Acts as a guanine-nucleotide releasing factor (GEF) for Rab GTPases by promoting the conversion of inactive RAB-GDP to the active form RAB-GTP. Acts as a GEF for RAB39A which enables HOPS-mediated autophagosome-lysosome membrane tethering and fusion in mammalian autophagy. Component of the C9orf72-SMCR8 complex where both subunits display GEF activity and that regulates autophagy. As part of the C9orf72-SMCR8-WDR41 (CSW) complex, functions as GEF for RAB8A and RAB39B, thereby promoting autophagosome maturation. As part of the C9orf72-SMCR8 complex, also functions as GTPase activating protein (GAP) for RAB8A and RAB11A in vitro. The C9orf72-SMCR8 complex also acts as a regulator of autophagy initiation by interacting with the ULK1/ATG1 kinase complex and modulating its protein kinase activity. Promotes initiation of autophagy by regulating the RAB1A-dependent trafficking of the ULK1/ATG1 kinase complex to the phagophore which leads to autophagosome formation. Acts as a regulator of mTORC1 signaling by promoting phosphorylation of mTORC1 substrates. Plays a role in endosomal trafficking. May be involved in regulating the maturation of phagosomes to lysosomes. Promotes the lysosomal localization and lysosome-mediated degradation of CARM1 which leads to inhibition of starvation-induced lipid metabolism. Regulates actin dynamics in motor neurons by inhibiting the GTP-binding activity of ARF6, leading to ARF6 inactivation. This reduces the activity of the LIMK1 and LIMK2 kinases which are responsible for phosphorylation and inactivation of cofilin, leading to CFL1/cofilin activation. Positively regulates axon extension and axon growth cone size in spinal motor neurons. Required for SMCR8 protein expression and localization at pre- and post-synaptic compartments in the forebrain, also regulates protein abundance of RAB3A and GRIA1/GLUR1 in post-synaptic compartments in the forebrain and hippocampus. Plays a role within the hematopoietic system in restricting inflammation and the development of autoimmunity. Functionally, regulates stress granule assembly in response to cellular stress. In terms of biological role, does not play a role in regulation of stress granule assembly in response to cellular stress. This Homo sapiens (Human) protein is Guanine nucleotide exchange factor C9orf72.